Here is a 393-residue protein sequence, read N- to C-terminus: Dual-specificity RNA methyltransferase RlmN (393 aa).

Glu-114 serves as the catalytic Proton acceptor. Residues 120–359 form the Radical SAM core domain; it reads EDDRATLCVS…VIVRKTRGDD (240 aa). An intrachain disulfide couples Cys-127 to Cys-364. Cys-134, Cys-138, and Cys-141 together coordinate [4Fe-4S] cluster. Residues 188 to 189, Ser-220, 242 to 244, and Asn-321 contribute to the S-adenosyl-L-methionine site; these read GE and SLH. The S-methylcysteine intermediate role is filled by Cys-364.

It belongs to the radical SAM superfamily. RlmN family. [4Fe-4S] cluster is required as a cofactor.

The protein resides in the cytoplasm. It carries out the reaction adenosine(2503) in 23S rRNA + 2 reduced [2Fe-2S]-[ferredoxin] + 2 S-adenosyl-L-methionine = 2-methyladenosine(2503) in 23S rRNA + 5'-deoxyadenosine + L-methionine + 2 oxidized [2Fe-2S]-[ferredoxin] + S-adenosyl-L-homocysteine. The catalysed reaction is adenosine(37) in tRNA + 2 reduced [2Fe-2S]-[ferredoxin] + 2 S-adenosyl-L-methionine = 2-methyladenosine(37) in tRNA + 5'-deoxyadenosine + L-methionine + 2 oxidized [2Fe-2S]-[ferredoxin] + S-adenosyl-L-homocysteine. Its function is as follows. Specifically methylates position 2 of adenine 2503 in 23S rRNA and position 2 of adenine 37 in tRNAs. m2A2503 modification seems to play a crucial role in the proofreading step occurring at the peptidyl transferase center and thus would serve to optimize ribosomal fidelity. The polypeptide is Dual-specificity RNA methyltransferase RlmN (Actinobacillus pleuropneumoniae serotype 5b (strain L20)).